The primary structure comprises 207 residues: Protein lin-7 homolog B (207 aa).

A Kinase interacting site motif is present at residues 1–13; the sequence is MAALVEPLGLERD. Positions 10–65 constitute an L27 domain; that stretch reads LERDVSRAVELLERLQRSGELPPQKLQALQRVLQSRFCSAIREVYEQLYDTLDITG. Positions 93–175 constitute a PDZ domain; it reads VVELPKTDEG…SVKLVVRYTP (83 aa). Residues 187-207 form a disordered region; sequence KMRSARRRQQHHSYSSLESRG. Positions 198–207 are enriched in polar residues; the sequence is HSYSSLESRG.

It belongs to the lin-7 family. Forms two exclusive ternary complexes with CASK and CASKIN1. The brain-specific heterotrimeric complex (LIN-10-LIN-2-LIN-7 complex) composed of at least APBA1, CASK, and LIN7, associates with the motor protein KIF17 to transport vesicles along microtubules. Forms a heterotrimeric complex composed of MMP5, LIN7B and PATJ; the N-terminal L27 domain of PALS1 interacts with the L27 domain of PATJ and the C-terminal L27 domain of PALS1 interacts with the L27 domain of LIN7B. Forms a heterotrimeric complex with DLG1 and CASK via their L27 domains. Interacts with DLG4 and GRIN2B as well as CDH1 and CTNNB1, the channels KCNJ12/Kir2.2, KCNJ4/Kir2.3 and probably KCNJ2/Kir2.1 and SLC6A12/BGT-1 via its PDZ domain. The association of LIN7A with cadherin and beta-catenin is calcium-dependent, occurs at synaptic junctions and requires the actin cytoskeleton. Interacts with EGFR, ERBB2, ERBB3 and ERBB4 with both PDZ and KID domains. Associates with KIF17 via APBA1. Interacts with ASIC3. Interacts with TOPK. Interacts with RTKN. Interacts with APBA1. Interacts with MPP7. Interacts with DLG2. Interacts with DLG3. As to expression, expressed only in brain.

The protein resides in the cell membrane. It is found in the basolateral cell membrane. The protein localises to the cell junction. Its subcellular location is the postsynaptic density membrane. It localises to the tight junction. Plays a role in establishing and maintaining the asymmetric distribution of channels and receptors at the plasma membrane of polarized cells. Forms membrane-associated multiprotein complexes that may regulate delivery and recycling of proteins to the correct membrane domains. The tripartite complex composed of LIN7 (LIN7A, LIN7B or LIN7C), CASK and APBA1 associates with the motor protein KIF17 to transport vesicles containing N-methyl-D-aspartate (NMDA) receptor subunit NR2B along microtubules. This complex may have the potential to couple synaptic vesicle exocytosis to cell adhesion in brain. Ensures the proper localization of GRIN2B (subunit 2B of the NMDA receptor) to neuronal postsynaptic density and may function in localizing synaptic vesicles at synapses where it is recruited by beta-catenin and cadherin. Required to localize Kir2 channels, GABA transporter (SLC6A12) and EGFR/ERBB1, ERBB2, ERBB3 and ERBB4 to the basolateral membrane of epithelial cells. May increase the amplitude of ASIC3 acid-evoked currents by stabilizing the channel at the cell surface. The chain is Protein lin-7 homolog B (Lin7b) from Rattus norvegicus (Rat).